A 446-amino-acid chain; its full sequence is N-succinylarginine dihydrolase (446 aa).

Residues 19–28 (AGLSFGNEAS), asparagine 110, and 137–138 (HR) each bind substrate. Glutamate 174 is a catalytic residue. Arginine 213 lines the substrate pocket. The active site involves histidine 249. Residues aspartate 251 and asparagine 364 each contribute to the substrate site. Cysteine 370 (nucleophile) is an active-site residue.

Belongs to the succinylarginine dihydrolase family. Homodimer.

It carries out the reaction N(2)-succinyl-L-arginine + 2 H2O + 2 H(+) = N(2)-succinyl-L-ornithine + 2 NH4(+) + CO2. It participates in amino-acid degradation; L-arginine degradation via AST pathway; L-glutamate and succinate from L-arginine: step 2/5. In terms of biological role, catalyzes the hydrolysis of N(2)-succinylarginine into N(2)-succinylornithine, ammonia and CO(2). This Acinetobacter baylyi (strain ATCC 33305 / BD413 / ADP1) protein is N-succinylarginine dihydrolase.